Reading from the N-terminus, the 221-residue chain is Protein-L-isoaspartate O-methyltransferase (221 aa).

The active site involves serine 70.

This sequence belongs to the methyltransferase superfamily. L-isoaspartyl/D-aspartyl protein methyltransferase family.

Its subcellular location is the cytoplasm. It carries out the reaction [protein]-L-isoaspartate + S-adenosyl-L-methionine = [protein]-L-isoaspartate alpha-methyl ester + S-adenosyl-L-homocysteine. Its function is as follows. Catalyzes the methyl esterification of L-isoaspartyl residues in peptides and proteins that result from spontaneous decomposition of normal L-aspartyl and L-asparaginyl residues. It plays a role in the repair and/or degradation of damaged proteins. This chain is Protein-L-isoaspartate O-methyltransferase, found in Alkalilimnicola ehrlichii (strain ATCC BAA-1101 / DSM 17681 / MLHE-1).